A 157-amino-acid chain; its full sequence is Ribosome maturation factor RimP (157 aa).

It belongs to the RimP family.

The protein resides in the cytoplasm. Its function is as follows. Required for maturation of 30S ribosomal subunits. In Thermosynechococcus vestitus (strain NIES-2133 / IAM M-273 / BP-1), this protein is Ribosome maturation factor RimP.